Here is a 419-residue protein sequence, read N- to C-terminus: MGRKSNESCSANPHSSSISQENLSQWNLDAEDLFDENESFLSEKDGVAGGKTNKNHLESPAEQLVLQLTVSEHAHSRSQNNNQGVFQLWSSPVNKGSIIDKRNSSVEENVTDESDLSESEKMNDSLLSYFKKMDLNLKPETIEHVERAFTEEANQVSVYADFLPAPFNTMDLHRFAFSKCESWKTTVDPPESSIERLIMRLLELERLQHMTIQRERPKLQSTFCSSMFSMAERPSSSKAITLKARPPKIPETPTLQTSSVDKNRDKRKNNSGSGKPEQNVPKWSLSTAGKSKSNSRSLLKCSSTSKQCAMAHDDVKNPKNSILNPCQDPPPKPTTTTQAIQPMIKVVSTRCLPPRSPMPVSPIPLSFPENPREEVKVPRTKKKCHRKSILQNRPFHVQKRNCLSPSLIARGKCSPTDQK.

Disordered regions lie at residues 1–23, 100–119, 234–298, and 362–388; these read MGRKSNESCSANPHSSSISQENL, DKRNSSVEENVTDESDLSES, PSSS…SRSL, and PIPLSFPENPREEVKVPRTKKKCHRKS. The segment covering 7-23 has biased composition (polar residues); that stretch reads ESCSANPHSSSISQENL. The span at 284-298 shows a compositional bias: polar residues; sequence SLSTAGKSKSNSRSL. Positions 378 to 388 are enriched in basic residues; the sequence is PRTKKKCHRKS.

The protein belongs to the FAM217 family.

This Rattus norvegicus (Rat) protein is Protein FAM217A (Fam217a).